The primary structure comprises 1108 residues: Retinal guanylyl cyclase 1 (1108 aa).

An N-terminal signal peptide occupies residues 1-54 (MSAWLLPAGGFPGAGFCIPAWQSRSSLSRVLRWPGPGLPGLLLLLLLPSPSAFS). The Extracellular segment spans residues 55-465 (AVFKVGVLGP…PDVICNGGVE (411 aa)). Residues cysteine 108 and cysteine 136 are joined by a disulfide bond. N-linked (GlcNAc...) asparagine glycosylation is present at asparagine 300. Residues 466 to 490 (PGLVFVGFLLVIVVGLTGAFLAHYL) traverse the membrane as a helical segment. Topologically, residues 491 to 1108 (RHRLLHMQMV…KARPGQFTGK (618 aa)) are cytoplasmic. The disordered stretch occupies residues 520–552 (GGSSRKVAQGSRSSLATRSTSDIRSVPSQPQES). The Protein kinase domain occupies 520 to 811 (GGSSRKVAQG…DLTFDLFKGI (292 aa)). The segment covering 529–552 (GSRSSLATRSTSDIRSVPSQPQES) has biased composition (polar residues). Residues 883-1013 (TLYFSDIVGF…DTVNTASRME (131 aa)) form the Guanylate cyclase domain. The tract at residues 1069–1108 (IPKPPDLQPGASNHGISLQEIPPERRKKLEKARPGQFTGK) is disordered.

It belongs to the adenylyl cyclase class-4/guanylyl cyclase family. Homodimer; requires homodimerization for guanylyl cyclase activity. Interacts (via C-terminus) with RD3 (via C-terminus); promotes the exit of GUCY2E from the endoplasmic reticulum and its trafficking to the photoreceptor outer segments. Interaction with RD3 negatively regulates GUCY2E guanylate cyclase activity. In terms of processing, there are 9 conserved cysteine residues in sensory guanylate cyclases, 6 in the extracellular domain, which may be involved in intra- or interchain disulfide bonds. In terms of tissue distribution, expressed in retina and enriched in photoreceptor outer segments.

It localises to the membrane. The protein resides in the photoreceptor outer segment membrane. It is found in the endoplasmic reticulum membrane. The enzyme catalyses GTP = 3',5'-cyclic GMP + diphosphate. Its activity is regulated as follows. Activated by GUCA1A when free calcium ions concentration is low, and inhibited by GUCA1A when free calcium ions concentration is high. Negatively regulated by RD3; inhibits the basal and GUCA1A-stimulated guanylate cyclase activity. Catalyzes the synthesis of cyclic GMP (cGMP) in rods and cones of photoreceptors. Plays an essential role in phototransduction, by mediating cGMP replenishment. May also participate in the trafficking of membrane-asociated proteins to the photoreceptor outer segment membrane. This is Retinal guanylyl cyclase 1 (Gucy2e) from Rattus norvegicus (Rat).